A 480-amino-acid polypeptide reads, in one-letter code: Aspartyl/glutamyl-tRNA(Asn/Gln) amidotransferase subunit B (480 aa).

This sequence belongs to the GatB/GatE family. GatB subfamily. Heterotrimer of A, B and C subunits.

It catalyses the reaction L-glutamyl-tRNA(Gln) + L-glutamine + ATP + H2O = L-glutaminyl-tRNA(Gln) + L-glutamate + ADP + phosphate + H(+). It carries out the reaction L-aspartyl-tRNA(Asn) + L-glutamine + ATP + H2O = L-asparaginyl-tRNA(Asn) + L-glutamate + ADP + phosphate + 2 H(+). In terms of biological role, allows the formation of correctly charged Asn-tRNA(Asn) or Gln-tRNA(Gln) through the transamidation of misacylated Asp-tRNA(Asn) or Glu-tRNA(Gln) in organisms which lack either or both of asparaginyl-tRNA or glutaminyl-tRNA synthetases. The reaction takes place in the presence of glutamine and ATP through an activated phospho-Asp-tRNA(Asn) or phospho-Glu-tRNA(Gln). In Caldicellulosiruptor saccharolyticus (strain ATCC 43494 / DSM 8903 / Tp8T 6331), this protein is Aspartyl/glutamyl-tRNA(Asn/Gln) amidotransferase subunit B.